A 199-amino-acid chain; its full sequence is NADH-quinone oxidoreductase subunit C (199 aa).

Belongs to the complex I 30 kDa subunit family. In terms of assembly, NDH-1 is composed of 14 different subunits. Subunits NuoB, C, D, E, F, and G constitute the peripheral sector of the complex.

The protein localises to the cell inner membrane. The catalysed reaction is a quinone + NADH + 5 H(+)(in) = a quinol + NAD(+) + 4 H(+)(out). Its function is as follows. NDH-1 shuttles electrons from NADH, via FMN and iron-sulfur (Fe-S) centers, to quinones in the respiratory chain. The immediate electron acceptor for the enzyme in this species is believed to be ubiquinone. Couples the redox reaction to proton translocation (for every two electrons transferred, four hydrogen ions are translocated across the cytoplasmic membrane), and thus conserves the redox energy in a proton gradient. This Rhodobacter capsulatus (Rhodopseudomonas capsulata) protein is NADH-quinone oxidoreductase subunit C.